The sequence spans 510 residues: MFPEKFLWGVAQSGFQFEMGDKLRRNIDTNTDWWHWVRDKTNIEKGLVSGDLPEEGINNYELYEKDHEIARKLGLNAYRIGIEWSRIFPWPTTFIDVDYSYNESYNLIEDVKITKDTLEELDEIANKREVAYYRSVINSLRSKGFKVIVNLNHFTLPYWLHDPIEARERALTNKRNGWVNPRTVIEFAKYAAYIAYKFGDIVDMWSTFNEPMVVVELGYLAPYSGFPPGVLNPEAAKLAILHMINAHALAYRQIKKFDTEKADKDSKEPAEVGIIYNNIGVAYPKDPNDSKDVKAAENDNFFHSGLFFEAIHKGKLNIEFDGETFIDAPYLKGNDWIGVNYYTREVVTYQEPMFPSIPLITFKGVQGYGYACRPGTLSKDDRPVSDIGWELYPEGMYDSIVEAHKYGVPVYVTENGIADSKDILRPYYIASHIKMTEKAFEDGYEVKGYFHWALTDNFEWALGFRMRFGLYEVNLITKERIPREKSVSIFREIVANNGVTKKIEEELLRG.

Glu210 serves as the catalytic Proton donor. The active-site Nucleophile is the Glu414.

This sequence belongs to the glycosyl hydrolase 1 family.

It catalyses the reaction Hydrolysis of terminal non-reducing beta-D-galactose residues in beta-D-galactosides.. The polypeptide is Beta-galactosidase (Pyrococcus woesei).